We begin with the raw amino-acid sequence, 214 residues long: Thymidylate kinase (214 aa).

ATP is bound at residue glycine 10–serine 17.

It belongs to the thymidylate kinase family.

The enzyme catalyses dTMP + ATP = dTDP + ADP. In terms of biological role, phosphorylation of dTMP to form dTDP in both de novo and salvage pathways of dTTP synthesis. This Brucella suis biovar 1 (strain 1330) protein is Thymidylate kinase.